The chain runs to 216 residues: Kynurenine formamidase (216 aa).

Residue Trp-25 coordinates substrate. His-55, His-59, and Asp-61 together coordinate Zn(2+). Residue His-65 is the Proton donor/acceptor of the active site. 2 residues coordinate Zn(2+): His-167 and Glu-179.

It belongs to the Cyclase 1 superfamily. KynB family. As to quaternary structure, homodimer. Zn(2+) is required as a cofactor.

It catalyses the reaction N-formyl-L-kynurenine + H2O = L-kynurenine + formate + H(+). The protein operates within amino-acid degradation; L-tryptophan degradation via kynurenine pathway; L-kynurenine from L-tryptophan: step 2/2. In terms of biological role, catalyzes the hydrolysis of N-formyl-L-kynurenine to L-kynurenine, the second step in the kynurenine pathway of tryptophan degradation. The sequence is that of Kynurenine formamidase from Cupriavidus taiwanensis (strain DSM 17343 / BCRC 17206 / CCUG 44338 / CIP 107171 / LMG 19424 / R1) (Ralstonia taiwanensis (strain LMG 19424)).